The following is a 392-amino-acid chain: 2-oxoisovalerate dehydrogenase subunit beta, mitochondrial (392 aa).

A mitochondrion-targeting transit peptide spans 1 to 50; the sequence is MAAVAAFAGWLLRLRAAGADGPWRRLCGAGLSRGFLQSASAYGAAAQRRQ. Tyrosine 152 is a binding site for thiamine diphosphate. K(+)-binding residues include glycine 178, leucine 180, threonine 181, cysteine 228, and aspartate 231. Residue lysine 232 is modified to N6-acetyllysine. K(+) is bound at residue asparagine 233. Lysine 241 is modified (N6-acetyllysine).

In terms of assembly, heterotetramer of 2 alpha/BCKDHA and 2 beta chains/BCKDHB that forms the branched-chain alpha-keto acid decarboxylase (E1) component of the BCKD complex. The branched-chain alpha-ketoacid dehydrogenase is a large complex composed of three major building blocks E1, E2 and E3. It is organized around E2, a 24-meric cubic core composed of DBT, to which are associated 6 to 12 copies of E1, and approximately 6 copies of the dehydrogenase E3, a DLD dimer. Requires thiamine diphosphate as cofactor.

The protein localises to the mitochondrion matrix. It catalyses the reaction N(6)-[(R)-lipoyl]-L-lysyl-[protein] + 3-methyl-2-oxobutanoate + H(+) = N(6)-[(R)-S(8)-2-methylpropanoyldihydrolipoyl]-L-lysyl-[protein] + CO2. Its function is as follows. Together with BCKDHA forms the heterotetrameric E1 subunit of the mitochondrial branched-chain alpha-ketoacid dehydrogenase (BCKD) complex. The BCKD complex catalyzes the multi-step oxidative decarboxylation of alpha-ketoacids derived from the branched-chain amino-acids valine, leucine and isoleucine producing CO2 and acyl-CoA which is subsequently utilized to produce energy. The E1 subunit catalyzes the first step with the decarboxylation of the alpha-ketoacid forming an enzyme-product intermediate. A reductive acylation mediated by the lipoylamide cofactor of E2 extracts the acyl group from the E1 active site for the next step of the reaction. In Bos taurus (Bovine), this protein is 2-oxoisovalerate dehydrogenase subunit beta, mitochondrial (BCKDHB).